Here is a 160-residue protein sequence, read N- to C-terminus: Ureidoglycolate lyase (160 aa).

It belongs to the ureidoglycolate lyase family. Homodimer. Ni(2+) is required as a cofactor.

It catalyses the reaction (S)-ureidoglycolate = urea + glyoxylate. It participates in nitrogen metabolism; (S)-allantoin degradation. Catalyzes the catabolism of the allantoin degradation intermediate (S)-ureidoglycolate, generating urea and glyoxylate. Involved in the utilization of allantoin as nitrogen source. The chain is Ureidoglycolate lyase from Salmonella enteritidis.